The following is a 512-amino-acid chain: Cytochrome P450 77A4 (512 aa).

A helical membrane pass occupies residues 9–29 (PTSLDFTFFAIIISGFVFIIT). C456 lines the heme pocket.

It belongs to the cytochrome P450 family. It depends on heme as a cofactor.

It is found in the membrane. Functionally, catalyzes the epoxidation of physiological unsaturated fatty acids in vitro. Can use laurate, oleate, linoleate, linolenate and vernolate as substrate. This chain is Cytochrome P450 77A4 (CYP77A4), found in Arabidopsis thaliana (Mouse-ear cress).